Here is a 120-residue protein sequence, read N- to C-terminus: Large ribosomal subunit protein uL18 (120 aa).

Belongs to the universal ribosomal protein uL18 family. Part of the 50S ribosomal subunit; part of the 5S rRNA/L5/L18/L25 subcomplex. Contacts the 5S and 23S rRNAs.

In terms of biological role, this is one of the proteins that bind and probably mediate the attachment of the 5S RNA into the large ribosomal subunit, where it forms part of the central protuberance. In Staphylococcus carnosus (strain TM300), this protein is Large ribosomal subunit protein uL18.